A 154-amino-acid polypeptide reads, in one-letter code: Snaclec lebecin subunit beta (154 aa).

The signal sequence occupies residues 1–23 (MGRIIFVSFGLLVVFLSLSGTGA). 3 disulfide bridges follow: cysteine 25-cysteine 36, cysteine 53-cysteine 150, and cysteine 125-cysteine 142. In terms of domain architecture, C-type lectin spans 32-151 (DEEHCYYVFF…CGDDYPFVCK (120 aa)). Asparagine 139 carries N-linked (GlcNAc...) asparagine glycosylation.

In terms of assembly, heterodimer with the alpha subunit (AC W5XDM0); disulfide-linked. Expressed by the venom gland.

The protein resides in the secreted. Its function is as follows. Inhibits human breast cancer cells (MDA-MB231) migration and proliferation, as well as their adhesion to fibrinogen and fibronectin. This inhibition may be due to the binding to receptors of the integrin family, probably alpha-v/beta-3 (ITGAV/ITGB3) (40% inhibition of cell adhesion) and alpha-5/beta-1 (ITGA5/ITGB1) (by comparison with lebectin). In Macrovipera lebetinus (Levantine viper), this protein is Snaclec lebecin subunit beta.